The primary structure comprises 200 residues: Small ribosomal subunit protein uS4 (200 aa).

The disordered stretch occupies residues 22–42 (TGKELQKRPYPPGQHGPGQRR). In terms of domain architecture, S4 RNA-binding spans 92 to 152 (SRLDNLVYRL…EKSRNLQVIK (61 aa)).

This sequence belongs to the universal ribosomal protein uS4 family. Part of the 30S ribosomal subunit. Contacts protein S5. The interaction surface between S4 and S5 is involved in control of translational fidelity.

One of the primary rRNA binding proteins, it binds directly to 16S rRNA where it nucleates assembly of the body of the 30S subunit. Functionally, with S5 and S12 plays an important role in translational accuracy. The polypeptide is Small ribosomal subunit protein uS4 (Geobacillus kaustophilus (strain HTA426)).